The primary structure comprises 152 residues: Erythema protein SVEP (152 aa).

Positions 1-18 (MSITQSFFVLTLAIFGAA) are cleaved as a signal peptide.

As to expression, salivary gland (at protein level).

The protein resides in the secreted. In terms of biological role, salivary vasoactive peptide; induces vasodilatation in bioassay with rabbit aortic rings. In Simulium vittatum (Striped black fly), this protein is Erythema protein SVEP.